Consider the following 353-residue polypeptide: Phosphoribosylformylglycinamidine cyclo-ligase (353 aa).

The protein belongs to the AIR synthase family.

It localises to the cytoplasm. It catalyses the reaction 2-formamido-N(1)-(5-O-phospho-beta-D-ribosyl)acetamidine + ATP = 5-amino-1-(5-phospho-beta-D-ribosyl)imidazole + ADP + phosphate + H(+). The protein operates within purine metabolism; IMP biosynthesis via de novo pathway; 5-amino-1-(5-phospho-D-ribosyl)imidazole from N(2)-formyl-N(1)-(5-phospho-D-ribosyl)glycinamide: step 2/2. The protein is Phosphoribosylformylglycinamidine cyclo-ligase of Pseudomonas aeruginosa (strain LESB58).